The chain runs to 479 residues: Wax ester synthase/diacylglycerol acyltransferase 2 (479 aa).

Residues Met-1–Asn-182 are Cytoplasmic-facing. His-144 serves as the catalytic Proton acceptor. A helical membrane pass occupies residues Val-183–Phe-199. Residues His-200 to Val-479 are Lumenal-facing. The N-linked (GlcNAc...) asparagine glycan is linked to Asn-253.

In the N-terminal section; belongs to the long-chain O-acyltransferase family. In terms of tissue distribution, mostly expressed in flowers and siliques and barely in roots and stems.

It localises to the cell membrane. The protein resides in the endoplasmic reticulum membrane. It carries out the reaction an acyl-CoA + a 1,2-diacyl-sn-glycerol = a triacyl-sn-glycerol + CoA. The catalysed reaction is a long chain fatty alcohol + a fatty acyl-CoA = a wax ester + CoA. The protein operates within glycerolipid metabolism; triacylglycerol biosynthesis. Its pathway is lipid metabolism. Its function is as follows. Bifunctional wax ester synthase/diacylglycerol acyltransferase. Involved in cuticular wax biosynthesis. This Arabidopsis thaliana (Mouse-ear cress) protein is Wax ester synthase/diacylglycerol acyltransferase 2.